The sequence spans 1231 residues: Chromosome-associated kinesin KIF4 (1231 aa).

Positions 9 to 337 (PVRVALRCRP…LRYADRARKI (329 aa)) constitute a Kinesin motor domain. 88–95 (GQTGSGKT) serves as a coordination point for ATP. Residues 351-1000 (ELNHLKQQVQ…IKQKLTLLQV (650 aa)) are a coiled coil. A Phosphoserine modification is found at S395. T800 carries the phosphothreonine modification. 3 positions are modified to phosphoserine: S802, S811, and S816. The segment at 1001 to 1231 (ASKQKPHLTR…GCSPIQEESH (231 aa)) is globular. Positions 1189–1212 (HPELKSIASESQENKAIGKKKKRA) are disordered. Phosphoserine occurs at positions 1224 and 1230.

Belongs to the TRAFAC class myosin-kinesin ATPase superfamily. Kinesin family. Chromokinesin subfamily. [2Fe-2S] cluster serves as cofactor. Requires [4Fe-4S] cluster as cofactor. Expressed in pyramidal cells in juvenile hippocampus, granular cells in juvenile cerebellar cortex and in adult spleen.

Its subcellular location is the nucleus. The protein resides in the chromosome. It is found in the cytoplasm. It localises to the cytoskeleton. Iron-sulfur (Fe-S) cluster binding motor protein that has a role in chromosome segregation during mitosis. Required for mitotic chromosomal positioning and bipolar spindle stabilization. The protein is Chromosome-associated kinesin KIF4 (Kif4) of Mus musculus (Mouse).